The primary structure comprises 425 residues: CinA-like protein (425 aa).

The protein belongs to the CinA family.

This Shewanella sp. (strain ANA-3) protein is CinA-like protein.